Reading from the N-terminus, the 322-residue chain is uncharacterized protein (322 aa).

A disordered region spans residues 1–63 (MFKIRKRSVP…DEASSSDSHY (63 aa)). The span at 34-49 (FVDDHGKPIAEYRDFP) shows a compositional bias: basic and acidic residues. The segment at 245–274 (WKVDRICTYYINRPDKCTRGDNCRFKHDDV) adopts a C3H1-type zinc-finger fold. Positions 278-322 (HRQKEIQSSRNQSWHHRTSSHKYSSENSDHRGYRRHRSRSPHARQ) are disordered. Positions 309–322 (GYRRHRSRSPHARQ) are enriched in basic residues.

This is an uncharacterized protein from Caenorhabditis elegans.